A 164-amino-acid polypeptide reads, in one-letter code: SsrA-binding protein (164 aa).

It belongs to the SmpB family.

The protein resides in the cytoplasm. Functionally, required for rescue of stalled ribosomes mediated by trans-translation. Binds to transfer-messenger RNA (tmRNA), required for stable association of tmRNA with ribosomes. tmRNA and SmpB together mimic tRNA shape, replacing the anticodon stem-loop with SmpB. tmRNA is encoded by the ssrA gene; the 2 termini fold to resemble tRNA(Ala) and it encodes a 'tag peptide', a short internal open reading frame. During trans-translation Ala-aminoacylated tmRNA acts like a tRNA, entering the A-site of stalled ribosomes, displacing the stalled mRNA. The ribosome then switches to translate the ORF on the tmRNA; the nascent peptide is terminated with the 'tag peptide' encoded by the tmRNA and targeted for degradation. The ribosome is freed to recommence translation, which seems to be the essential function of trans-translation. The protein is SsrA-binding protein of Shewanella sediminis (strain HAW-EB3).